Reading from the N-terminus, the 149-residue chain is Cytochrome c-type biogenesis protein CcmE (149 aa).

The Cytoplasmic portion of the chain corresponds to 1 to 7 (MKKRHQR). The chain crosses the membrane as a helical; Signal-anchor for type II membrane protein span at residues 8–28 (LFLVLGVVAGVSVATALVLNA). The Periplasmic segment spans residues 29–149 (FRDNMTFFIT…EHSVDEVGDY (121 aa)). Positions 123 and 127 each coordinate heme.

It belongs to the CcmE/CycJ family.

The protein localises to the cell inner membrane. In terms of biological role, heme chaperone required for the biogenesis of c-type cytochromes. Transiently binds heme delivered by CcmC and transfers the heme to apo-cytochromes in a process facilitated by CcmF and CcmH. In Halorhodospira halophila (strain DSM 244 / SL1) (Ectothiorhodospira halophila (strain DSM 244 / SL1)), this protein is Cytochrome c-type biogenesis protein CcmE.